A 342-amino-acid chain; its full sequence is 4-hydroxy-3-methylbut-2-enyl diphosphate reductase (342 aa).

Cysteine 47 provides a ligand contact to [4Fe-4S] cluster. (2E)-4-hydroxy-3-methylbut-2-enyl diphosphate contacts are provided by histidine 78 and histidine 111. Positions 78 and 111 each coordinate dimethylallyl diphosphate. Positions 78 and 111 each coordinate isopentenyl diphosphate. [4Fe-4S] cluster is bound at residue cysteine 133. Residue histidine 161 coordinates (2E)-4-hydroxy-3-methylbut-2-enyl diphosphate. A dimethylallyl diphosphate-binding site is contributed by histidine 161. Isopentenyl diphosphate is bound at residue histidine 161. Residue glutamate 163 is the Proton donor of the active site. Threonine 201 lines the (2E)-4-hydroxy-3-methylbut-2-enyl diphosphate pocket. Cysteine 231 lines the [4Fe-4S] cluster pocket. Serine 259, serine 260, asparagine 261, and serine 303 together coordinate (2E)-4-hydroxy-3-methylbut-2-enyl diphosphate. Dimethylallyl diphosphate is bound by residues serine 259, serine 260, asparagine 261, and serine 303. Serine 259, serine 260, asparagine 261, and serine 303 together coordinate isopentenyl diphosphate.

This sequence belongs to the IspH family. It depends on [4Fe-4S] cluster as a cofactor.

It carries out the reaction isopentenyl diphosphate + 2 oxidized [2Fe-2S]-[ferredoxin] + H2O = (2E)-4-hydroxy-3-methylbut-2-enyl diphosphate + 2 reduced [2Fe-2S]-[ferredoxin] + 2 H(+). The enzyme catalyses dimethylallyl diphosphate + 2 oxidized [2Fe-2S]-[ferredoxin] + H2O = (2E)-4-hydroxy-3-methylbut-2-enyl diphosphate + 2 reduced [2Fe-2S]-[ferredoxin] + 2 H(+). It participates in isoprenoid biosynthesis; dimethylallyl diphosphate biosynthesis; dimethylallyl diphosphate from (2E)-4-hydroxy-3-methylbutenyl diphosphate: step 1/1. It functions in the pathway isoprenoid biosynthesis; isopentenyl diphosphate biosynthesis via DXP pathway; isopentenyl diphosphate from 1-deoxy-D-xylulose 5-phosphate: step 6/6. Catalyzes the conversion of 1-hydroxy-2-methyl-2-(E)-butenyl 4-diphosphate (HMBPP) into a mixture of isopentenyl diphosphate (IPP) and dimethylallyl diphosphate (DMAPP). Acts in the terminal step of the DOXP/MEP pathway for isoprenoid precursor biosynthesis. This chain is 4-hydroxy-3-methylbut-2-enyl diphosphate reductase, found in Anaplasma marginale (strain St. Maries).